The primary structure comprises 640 residues: Threonine--tRNA ligase (640 aa).

In terms of domain architecture, TGS spans 1-61 (MPIITLPDGS…TNDAEIQIIT (61 aa)). The tract at residues 242 to 533 (DHRKLGKKLS…LIENYSGNLP (292 aa)) is catalytic. Residues Cys333, His384, and His510 each coordinate Zn(2+).

The protein belongs to the class-II aminoacyl-tRNA synthetase family. Homodimer. Requires Zn(2+) as cofactor.

The protein resides in the cytoplasm. The enzyme catalyses tRNA(Thr) + L-threonine + ATP = L-threonyl-tRNA(Thr) + AMP + diphosphate + H(+). Catalyzes the attachment of threonine to tRNA(Thr) in a two-step reaction: L-threonine is first activated by ATP to form Thr-AMP and then transferred to the acceptor end of tRNA(Thr). Also edits incorrectly charged L-seryl-tRNA(Thr). In Prochlorococcus marinus (strain NATL1A), this protein is Threonine--tRNA ligase.